The primary structure comprises 360 residues: 45 kDa calcium-binding protein (360 aa).

Residues 1–29 (MVSKQAFLFSLGSLYLSLLFIFLLMDVYA) form the signal peptide. Asn-33 carries an N-linked (GlcNAc...) asparagine glycan. 5 EF-hand domains span residues 96 to 131 (RNRR…KTEE), 135 to 170 (EAVN…SKGF), 231 to 266 (MLKF…TVEN), 276 to 311 (WVRD…MNEY), and 312 to 347 (NALN…FTGS). Positions 109, 111, 113, 115, 120, 148, 150, 152, 154, 159, 244, 246, 248, 250, 255, 289, 291, 293, 300, 325, 327, 329, and 336 each coordinate Ca(2+).

Belongs to the CREC family.

It is found in the golgi apparatus lumen. May regulate calcium-dependent activities in the endoplasmic reticulum lumen or post-ER compartment. This chain is 45 kDa calcium-binding protein (sdf4), found in Xenopus laevis (African clawed frog).